A 548-amino-acid chain; its full sequence is CTP synthase (548 aa).

Residues 1–270 (MNRRSCAFIF…DTKISALLGC (270 aa)) are amidoligase domain. Ser17 serves as a coordination point for CTP. Ser17 contributes to the UTP binding site. Residues 18-23 (SIGKGL) and Asp75 each bind ATP. Mg(2+) is bound by residues Asp75 and Glu143. Residues 150–152 (DIE), 190–195 (KTKPSQ), and Lys227 each bind CTP. Residues 190 to 195 (KTKPSQ) and Lys227 contribute to the UTP site. The region spanning 305-548 (YSGLCDAYIS…VRAGLLRKYS (244 aa)) is the Glutamine amidotransferase type-1 domain. Gly356 lines the L-glutamine pocket. Residue Cys383 is the Nucleophile; for glutamine hydrolysis of the active site. L-glutamine contacts are provided by residues 384–387 (FGFQ), Glu407, and Arg475. Catalysis depends on residues His521 and Glu523.

This sequence belongs to the CTP synthase family. In terms of assembly, homotetramer.

It catalyses the reaction UTP + L-glutamine + ATP + H2O = CTP + L-glutamate + ADP + phosphate + 2 H(+). The catalysed reaction is L-glutamine + H2O = L-glutamate + NH4(+). It carries out the reaction UTP + NH4(+) + ATP = CTP + ADP + phosphate + 2 H(+). Its pathway is pyrimidine metabolism; CTP biosynthesis via de novo pathway; CTP from UDP: step 2/2. Allosterically activated by GTP, when glutamine is the substrate; GTP has no effect on the reaction when ammonia is the substrate. The allosteric effector GTP functions by stabilizing the protein conformation that binds the tetrahedral intermediate(s) formed during glutamine hydrolysis. Inhibited by the product CTP, via allosteric rather than competitive inhibition. Functionally, catalyzes the ATP-dependent amination of UTP to CTP with either L-glutamine or ammonia as the source of nitrogen. Regulates intracellular CTP levels through interactions with the four ribonucleotide triphosphates. The protein is CTP synthase of Neorickettsia sennetsu (strain ATCC VR-367 / Miyayama) (Ehrlichia sennetsu).